A 20-amino-acid chain; its full sequence is Pregnancy-associated glycoprotein 75 (20 aa).

Belongs to the peptidase A1 family. In terms of processing, N-glycosylated. In terms of tissue distribution, expressed in chorionic epithelium (trophectoderm).

Its subcellular location is the secreted. The chain is Pregnancy-associated glycoprotein 75 from Bubalus bubalis (Domestic water buffalo).